The primary structure comprises 619 residues: UvrABC system protein C (619 aa).

Positions 20–98 (TAPGVYRMYA…IKSLSPRYNV (79 aa)) constitute a GIY-YIG domain. The UVR domain occupies 207–242 (DQLGEEIMHSMQQASEALEFERAARLRDLLSSLRSM).

The protein belongs to the UvrC family. As to quaternary structure, interacts with UvrB in an incision complex.

It localises to the cytoplasm. Functionally, the UvrABC repair system catalyzes the recognition and processing of DNA lesions. UvrC both incises the 5' and 3' sides of the lesion. The N-terminal half is responsible for the 3' incision and the C-terminal half is responsible for the 5' incision. The chain is UvrABC system protein C from Xanthomonas axonopodis pv. citri (strain 306).